The sequence spans 201 residues: uncharacterized protein (201 aa).

The chain crosses the membrane as a helical span at residues 11-31; it reads IIILTIMILTIIIFTRTINGL.

It is found in the membrane. This is an uncharacterized protein from Acanthamoeba polyphaga mimivirus (APMV).